A 320-amino-acid polypeptide reads, in one-letter code: MSYCSGVAISADEGITMRNGRAKALQEHSPDQVATPLLPQVPPQEQQDLNPQQQQQQQQQQQATPQKQAMSADEKKATKKSLVIVAGIFVASLVTMCYVYAIFPELNASEKQHLKIPRDIQDAKMLAKVLDRYKDMYYFEVMFGVVVAYVFLQTFAIPGSLFLSILLGFLYKFPIALFLICFCSALGATLCYTLSNLVGRRLIRHFWPKKTSEWSKHVEEYRDSLFNYMLFLRMTPILPNWFINLASPVIGVPLHIFALGTFCGVAPPSVIAIQAGKTLQKMTSSSEAFSWTSMGILMACACASLLPGLLKNKFKHKKEA.

A disordered region spans residues 20-72 (GRAKALQEHSPDQVATPLLPQVPPQEQQDLNPQQQQQQQQQQQATPQKQAMSA). Over residues 43–68 (PQEQQDLNPQQQQQQQQQQQATPQKQ) the composition is skewed to low complexity. The next 6 membrane-spanning stretches (helical) occupy residues 83–103 (VIVAGIFVASLVTMCYVYAIF), 141–161 (VMFGVVVAYVFLQTFAIPGSL), 173–195 (FPIALFLICFCSALGATLCYTLS), 225–242 (LFNYMLFLRMTPILPNWF), 245–265 (LASPVIGVPLHIFALGTFCGV), and 289–309 (FSWTSMGILMACACASLLPGL).

It belongs to the TMEM41 family. In embryos, strongly expressed in the nervous system.

It is found in the membrane. Functionally, required in cholinergic neurons, but not in motor neurons, for normal neurotransmitter release by motor neurons. Involved in muscle growth. In Drosophila melanogaster (Fruit fly), this protein is Transmembrane protein 41 homolog (stas).